The chain runs to 256 residues: MKVLLTNDDGFHANGIKVLKEIVMAAGIASEIWVVAPLSNCSGCGRSVGLRHAIEVYKVSDTEFIVNSTPSTTMFLGLKEIVGEKPDLVLSGINSGVNIGNDVTYSGTIAAAAEAAMMSIPSIAISQEYDGRSGEINWENPRKFLKGIVDMLLGAPSWDKSTVMSVNFPLISAKGIKFTSQGKYMPYNKIEKKKNAASSISYTIHRTAPDKDSRGESDDSIRALDDGYVTITPLKFDMTDFDILESLMLLNEGCNI.

D8, D9, S42, and N94 together coordinate a divalent metal cation.

This sequence belongs to the SurE nucleotidase family. The cofactor is a divalent metal cation.

Its subcellular location is the cytoplasm. It carries out the reaction a ribonucleoside 5'-phosphate + H2O = a ribonucleoside + phosphate. Its function is as follows. Nucleotidase that shows phosphatase activity on nucleoside 5'-monophosphates. This Ehrlichia chaffeensis (strain ATCC CRL-10679 / Arkansas) protein is 5'-nucleotidase SurE.